The sequence spans 339 residues: MSENNQSNQNNQINKIIKSTIEEIEKKFGNESIMLLGQKEKCDVDVFSSGSYAINSALGIGGFPKGRIIEIFGPESSGKTTIALHTIAEIQKKNGFAAFIDVEHSIDPVYAKNLGIDIDNLLISQPDSGEQALEIVDILAKSGSIDLIVVDSVAALVPEAELNGEMKDQSIGLQARLMSKALRKITGSLSKNKTSVIFINQVREKIGVVFGNPETTPGGRALKFYASIRLDVRKSTNIMLNNDISGNQIRVKVVKNKLAPPFKIAETEIIFSKGINKFGEVADLALVHDVLQKKGAWFSYNGNNIAQGRQKLIAQLESNNELFEEIFQKIVEKENQKLS.

73–80 serves as a coordination point for ATP; that stretch reads GPESSGKT.

The protein belongs to the RecA family.

The protein localises to the cytoplasm. Functionally, can catalyze the hydrolysis of ATP in the presence of single-stranded DNA, the ATP-dependent uptake of single-stranded DNA by duplex DNA, and the ATP-dependent hybridization of homologous single-stranded DNAs. It interacts with LexA causing its activation and leading to its autocatalytic cleavage. In Mycoplasmopsis pulmonis (strain UAB CTIP) (Mycoplasma pulmonis), this protein is Protein RecA.